Here is a 211-residue protein sequence, read N- to C-terminus: MVDWDVYLVTQASLSAGRTTDEIVAEAIESGVGVVQLREKNRTARERYELGQKLRELTREADVTFVVNDRIDLAQAIDADGVHLGDDDLPVSVARDILGDDAVIGRSVSTVEDAREAATAGADYLGVGAVFATGSKDDIDDEEYAVGTDRVAAIAEAVDIPFVGIGGITAGNATAVVDAGADGVAVITEITKADDPAAAAEALHSAVEQGR.

4-amino-2-methyl-5-(diphosphooxymethyl)pyrimidine-binding positions include 36–40 (QLREK) and asparagine 68. Residues aspartate 69 and aspartate 88 each coordinate Mg(2+). Residue serine 107 participates in 4-amino-2-methyl-5-(diphosphooxymethyl)pyrimidine binding. 133-135 (TGS) is a binding site for 2-[(2R,5Z)-2-carboxy-4-methylthiazol-5(2H)-ylidene]ethyl phosphate. Position 136 (lysine 136) interacts with 4-amino-2-methyl-5-(diphosphooxymethyl)pyrimidine. 2-[(2R,5Z)-2-carboxy-4-methylthiazol-5(2H)-ylidene]ethyl phosphate contacts are provided by residues glycine 167 and 187 to 188 (IT).

This sequence belongs to the thiamine-phosphate synthase family. Requires Mg(2+) as cofactor.

The catalysed reaction is 2-[(2R,5Z)-2-carboxy-4-methylthiazol-5(2H)-ylidene]ethyl phosphate + 4-amino-2-methyl-5-(diphosphooxymethyl)pyrimidine + 2 H(+) = thiamine phosphate + CO2 + diphosphate. It catalyses the reaction 2-(2-carboxy-4-methylthiazol-5-yl)ethyl phosphate + 4-amino-2-methyl-5-(diphosphooxymethyl)pyrimidine + 2 H(+) = thiamine phosphate + CO2 + diphosphate. It carries out the reaction 4-methyl-5-(2-phosphooxyethyl)-thiazole + 4-amino-2-methyl-5-(diphosphooxymethyl)pyrimidine + H(+) = thiamine phosphate + diphosphate. The protein operates within cofactor biosynthesis; thiamine diphosphate biosynthesis; thiamine phosphate from 4-amino-2-methyl-5-diphosphomethylpyrimidine and 4-methyl-5-(2-phosphoethyl)-thiazole: step 1/1. Functionally, condenses 4-methyl-5-(beta-hydroxyethyl)thiazole monophosphate (THZ-P) and 2-methyl-4-amino-5-hydroxymethyl pyrimidine pyrophosphate (HMP-PP) to form thiamine monophosphate (TMP). The sequence is that of Thiamine-phosphate synthase from Haloarcula marismortui (strain ATCC 43049 / DSM 3752 / JCM 8966 / VKM B-1809) (Halobacterium marismortui).